The primary structure comprises 181 residues: Oligoribonuclease (181 aa).

The region spanning 8-171 (LIWIDLEMTG…DDIRESVAEL (164 aa)) is the Exonuclease domain. The active site involves Tyr129.

Belongs to the oligoribonuclease family.

The protein resides in the cytoplasm. In terms of biological role, 3'-to-5' exoribonuclease specific for small oligoribonucleotides. This chain is Oligoribonuclease, found in Shigella flexneri.